Reading from the N-terminus, the 94-residue chain is Putative regulatory protein Tmel_0100 (94 aa).

It belongs to the RemA family.

This chain is Putative regulatory protein Tmel_0100, found in Thermosipho melanesiensis (strain DSM 12029 / CIP 104789 / BI429).